Reading from the N-terminus, the 3623-residue chain is Cubilin (3623 aa).

Positions 1-23 are cleaved as a signal peptide; sequence MMNMSLPFLWSLLTLLIFAEVNG. Residues 24 to 35 constitute a propeptide, removed in mature form; that stretch reads EAGELELQRQKR. The interaction with AMN stretch occupies residues 42-49; that stretch reads PRMATERG. An N-linked (GlcNAc...) asparagine glycan is attached at N105. Residues 132–168 form the EGF-like 1 domain; the sequence is DKKVCSSNPCQNGGTCLNLHDSFFCICPPQWKGPLCS. 9 disulfides stabilise this stretch: C136–C147, C141–C156, C158–C167, C174–C190, C184–C199, C201–C210, C267–C280, C274–C289, and C292–C303. Residues 170 to 211 enclose the EGF-like 2; calcium-binding domain; the sequence is DVNECEIYSGTPLSCQNGGTCVNTMGSYSCHCPPETYGPQCA. Residues 263–304 form the EGF-like 3; calcium-binding domain; it reads DRDECSFQPGPCSTLVQCFNTQGSFYCGACPTGWQGNGYICE. In terms of domain architecture, EGF-like 4; calcium-binding spans 305 to 348; that stretch reads DINECEINNGGCSVAPPVECVNTPGSSHCQACPPGYQGDGRVCT. EGF-like domains are found at residues 349–385 and 395–430; these read LTDI…YTGN and LSNI…VNCT. Cystine bridges form between C353/C366, C360/C376, C399/C409, C404/C418, C420/C429, C436/C447, C441/C456, C458/C467, C474/C500, C527/C549, C590/C616, C643/C665, and C708/C734. A glycan (N-linked (GlcNAc...) asparagine) is linked at N428. The EGF-like 7; calcium-binding domain maps to 432-468; that stretch reads NINECLSNPCLNGGTCVDGVDSFSCECTRLWTGALCQ. CUB domains lie at 474-586, 590-702, 708-816, 816-928, 932-1042, 1048-1161, 1165-1277, 1278-1389, 1391-1506, 1510-1619, 1620-1734, 1738-1850, 1852-1963, 1978-2091, 2092-2213, 2217-2334, 2336-2448, 2452-2565, 2570-2687, 2689-2801, 2805-2919, 2920-3035, 3037-3150, 3157-3274, 3278-3393, 3395-3507, and 3511-3623; these read CGES…WETQ, CGGI…YLTS, CGGN…YQVA, ACGD…FSAE, CGEI…YEAI, CLQD…WDGS, CGGN…YRQT, CENV…WFVY, CGGE…WQAV, CGGI…FRQA, CGGH…VTAS, CGGT…FMKI, GNDN…WFAV, CGGF…FHKS, CGGY…YEAK, CGGN…YSIA, CGGR…FESS, CGGD…YTSS, CGGS…YSFT, CGGI…WNTQ, CGGI…FVSR, CGSN…YRII, CGGV…FRQT, CGGY…YTIM, CGGT…YQIA, CNRD…WTSS, and CGGT…TWDS. Residue N482 is glycosylated (N-linked (GlcNAc...) asparagine). 4 N-linked (GlcNAc...) asparagine glycosylation sites follow: N711, N749, N781, and N857. 2 disulfide bridges follow: C869/C891 and C932/C958. N957 carries an N-linked (GlcNAc...) asparagine glycan. E980 is a binding site for Ca(2+). N-linked (GlcNAc...) asparagine glycosylation is present at N984. A disulfide bridge connects residues C985 and C1005. Residues D988, D1027, D1029, and L1030 each contribute to the Ca(2+) site. C1048 and C1074 form a disulfide bridge. The N-linked (GlcNAc...) asparagine glycan is linked to N1092. Positions 1096, 1105, 1146, 1148, and 1149 each coordinate Ca(2+). A disulfide bridge links C1165 with C1191. An N-linked (GlcNAc...) asparagine glycan is attached at N1168. E1213 contacts Ca(2+). An N-linked (GlcNAc...) asparagine glycan is attached at N1217. C1218 and C1240 are disulfide-bonded. Residues D1221, D1262, G1264, and Q1265 each coordinate Ca(2+). C1278 and C1306 form a disulfide bridge. Residues N1285, N1307, and N1319 are each glycosylated (N-linked (GlcNAc...) asparagine). E1328 provides a ligand contact to Ca(2+). A glycan (N-linked (GlcNAc...) asparagine) is linked at N1332. An intrachain disulfide couples C1333 to C1351. Ca(2+) is bound by residues D1336, D1373, and V1375. 2 cysteine pairs are disulfide-bonded: C1391/C1417 and C1444/C1466. An N-linked (GlcNAc...) asparagine glycan is attached at N1500. The cysteines at positions 1510 and 1536 are disulfide-linked. N1551 carries an N-linked (GlcNAc...) asparagine glycan. 5 cysteine pairs are disulfide-bonded: C1563–C1581, C1620–C1647, C1675–C1697, C1738–C1764, and C1791–C1812. N1646 carries N-linked (GlcNAc...) asparagine glycosylation. N-linked (GlcNAc...) asparagine glycans are attached at residues N1802, N1819, and N1885. Intrachain disulfides connect C1905–C1927, C1978–C2006, and C2032–C2054. N-linked (GlcNAc...) asparagine glycans are attached at residues N2085 and N2117. 2 disulfide bridges follow: C2092–C2118 and C2217–C2247. Residue N2274 is glycosylated (N-linked (GlcNAc...) asparagine). Disulfide bonds link C2275–C2297 and C2336–C2363. N-linked (GlcNAc...) asparagine glycans are attached at residues N2386 and N2400. 3 cysteine pairs are disulfide-bonded: C2390/C2411, C2452/C2478, and C2505/C2527. N2531, N2581, N2592, and N2610 each carry an N-linked (GlcNAc...) asparagine glycan. C2570 and C2599 are joined by a disulfide. Cystine bridges form between C2628–C2649, C2689–C2715, C2742–C2764, C2805–C2831, C2860–C2883, C2920–C2946, and C2977–C2999. N-linked (GlcNAc...) asparagine glycosylation is present at N2813. N-linked (GlcNAc...) asparagine glycosylation is found at N2923 and N2945. The residue at position 3008 (T3008) is a Phosphothreonine. Intrachain disulfides connect C3037–C3064 and C3091–C3113. N3042, N3103, N3125, and N3165 each carry an N-linked (GlcNAc...) asparagine glycan. Intrachain disulfides connect C3157–C3185 and C3215–C3237. N-linked (GlcNAc...) asparagine glycosylation is found at N3268, N3283, N3290, and N3295. Disulfide bonds link C3278-C3306 and C3332-C3354. The N-linked (GlcNAc...) asparagine glycan is linked to N3357. C3395 and C3421 are joined by a disulfide. N-linked (GlcNAc...) asparagine glycans are attached at residues N3430, N3457, N3533, and N3576. Cystine bridges form between C3448/C3470, C3511/C3537, and C3564/C3586.

As to quaternary structure, interacts with AMN. Component of the cubam complex composed of one CUBN trimer and one AMN chain. The cubam complex can dimerize. Interacts with LRP2 in a dual-receptor complex in a calcium-dependent manner. Found in a complex with PID1/PCLI1, LRP1 and CUBNI. Interacts with LRP1 and PID1/PCLI1. Post-translationally, the precursor is cleaved by a trans-Golgi proteinase furin, removing a propeptide. In terms of processing, N-glycosylated. Detected in kidney cortex (at protein level). Expressed in kidney proximal tubule cells, placenta, visceral yolk-sac cells and in absorptive intestinal cells. Expressed in the epithelium of intestine and kidney.

Its subcellular location is the apical cell membrane. It is found in the cell membrane. It localises to the membrane. The protein resides in the coated pit. The protein localises to the endosome. Its subcellular location is the lysosome membrane. Its function is as follows. Endocytic receptor which plays a role in lipoprotein, vitamin and iron metabolism by facilitating their uptake. Acts together with LRP2 to mediate endocytosis of high-density lipoproteins, GC, hemoglobin, ALB, TF and SCGB1A1. Acts together with AMN to mediate endocytosis of the CBLIF-cobalamin complex. Binds to ALB, MB, Kappa and lambda-light chains, TF, hemoglobin, GC, SCGB1A1, APOA1, high density lipoprotein, and the CBLIF-cobalamin complex. Ligand binding requires calcium. Serves as important transporter in several absorptive epithelia, including intestine, renal proximal tubules and embryonic yolk sac. May play an important role in the development of the peri-implantation embryo through internalization of APOA1 and cholesterol. Binds to LGALS3 at the maternal-fetal interface. The sequence is that of Cubilin (CUBN) from Homo sapiens (Human).